Consider the following 115-residue polypeptide: uncharacterized protein (115 aa).

3 helical membrane passes run 1–21 (MFLA…FGSW), 33–53 (ALAL…LAAG), and 54–74 (GVVA…VCIA).

This sequence to M.leprae ML0030.

The protein resides in the cell membrane. This is an uncharacterized protein from Mycobacterium tuberculosis (strain CDC 1551 / Oshkosh).